The chain runs to 498 residues: ATP synthase subunit beta, chloroplastic (498 aa).

172–179 contacts ATP; it reads GGAGVGKT.

This sequence belongs to the ATPase alpha/beta chains family. As to quaternary structure, F-type ATPases have 2 components, CF(1) - the catalytic core - and CF(0) - the membrane proton channel. CF(1) has five subunits: alpha(3), beta(3), gamma(1), delta(1), epsilon(1). CF(0) has four main subunits: a(1), b(1), b'(1) and c(9-12).

The protein resides in the plastid. It localises to the chloroplast thylakoid membrane. It catalyses the reaction ATP + H2O + 4 H(+)(in) = ADP + phosphate + 5 H(+)(out). In terms of biological role, produces ATP from ADP in the presence of a proton gradient across the membrane. The catalytic sites are hosted primarily by the beta subunits. The sequence is that of ATP synthase subunit beta, chloroplastic from Myristica fragrans (Nutmeg).